The primary structure comprises 118 residues: Protein RALF-like 24 (118 aa).

The signal sequence occupies residues 1-22 (MSRSLALVYLSLLCLQTHLSIS). The propeptide at 23-63 (VTVPIPSVNGEIDAMLNRNGVIGEEEGEEMMPSEISRRVMM) is removed in mature form. Cystine bridges form between C81–C91 and C103–C109.

This sequence belongs to the plant rapid alkalinization factor (RALF) family. In terms of processing, proteolytically cleaved, probably by S1P, a subtilisin-like serine protease (subtilase).

The protein localises to the secreted. Cell signaling peptide that may regulate plant stress, growth, and development. Mediates a rapid alkalinization of extracellular space by mediating a transient increase in the cytoplasmic Ca(2+) concentration leading to a calcium-dependent signaling events through a cell surface receptor and a concomitant activation of some intracellular mitogen-activated protein kinases. The sequence is that of Protein RALF-like 24 (RALFL24) from Arabidopsis thaliana (Mouse-ear cress).